The chain runs to 479 residues: Protein ORD (479 aa).

Residues 102-140 (KEEETEPESESDLDEGPSTSKQALERMVQRAERKAKEAS) form a disordered region. Residues 104–116 (EETEPESESDLDE) are compositionally biased toward acidic residues. A compositionally biased stretch (basic and acidic residues) spans 124–140 (ALERMVQRAERKAKEAS).

Interacts with Sce.

It is found in the nucleus. Its subcellular location is the chromosome. The protein resides in the centromere. Functionally, essential for proper maintenance of sister-chromatid cohesion in both male and female meiosis. Mutations in ord cause premature separation of the sister chromatids in meiosis I and random segregation in both meiotic divisions. Required for chiasma maintenance in female meiosis. Mutations in ord reduce recombination in female meiosis. The polypeptide is Protein ORD (ord) (Drosophila melanogaster (Fruit fly)).